The primary structure comprises 91 residues: Small ribosomal subunit protein bS16 (91 aa).

Belongs to the bacterial ribosomal protein bS16 family.

This chain is Small ribosomal subunit protein bS16, found in Enterococcus faecalis (strain ATCC 700802 / V583).